The following is a 409-amino-acid chain: NDP-glycosyltransferase ltbB (409 aa).

N-linked (GlcNAc...) asparagine glycosylation occurs at Asn-36. A helical transmembrane segment spans residues 319-339 (IWAFAYVWAWLQTLYTAPWIA).

Belongs to the GT2 glycosyltransferase family.

Its subcellular location is the membrane. It functions in the pathway secondary metabolite biosynthesis. NDP-glycosyltransferase; part of the gene cluster that mediates the biosynthesis of luteodienoside A, a glycosylated polyketide consisting of an unusual 1-O-beta-D-glucopyranosyl-myo-inositol (glucinol) ester of 3-hydroxy-2,2,4-trimethylocta-4,6-dienoic acid. LtbB likely serves as a glucinol synthase by transferring D-glucose to myo-inositol using NDP-glucose as a substrate. The ltbA carnitine O-acyltransferase (cAT) domain uses glucinol produced by the glycosyltransferase ltbB as an offloading substrate to release luteodienoside A from the HR-PKS. Since ltbA and ltbB are sufficient for the biosynthesis of luteodienoside A, the functions of the methyltransferase ltbC and the FAD-binding monooxygenase ltbD within the pathway remain obscur. The chain is NDP-glycosyltransferase ltbB from Aspergillus luteorubrus.